Consider the following 676-residue polypeptide: WD repeat-containing protein 48 (676 aa).

A Phosphotyrosine modification is found at tyrosine 28. 8 WD repeats span residues 28–67 (YNRNGVNALQLDPALNRLFTAGRDSIIRIWSVNQHKQDPY), 73–112 (HHTDWVNDVVLCCNGKTLISASSDTTVKVWNAHKGFCMST), 115–154 (THKDYVKALAYAKDKELVASAGLDRQIFLWDVNTLTALTA), 166–205 (GNKDSIYSLAMNQLGTIIVSGSTEKVLRVWDPRTCAKLMK), 208–247 (GHTDNVKALLLHRDGTQCLSGSSDGTIRLWSLGQQRCIAT), 250–289 (VHDEGVWALQVNDAFTHVYSGGRDRKIYCTDLRNPDIRVL), 292–334 (EEKA…NFRA), and 358–397 (KGGASIIQCHILNDKRHILTKDTNNNVAYWDVLKACKVED). At lysine 214 the chain carries N6-acetyllysine. Position 578 is an N6-acetyllysine (lysine 578). The interval 607–628 (LDNESQTTSSSNNEKPEQEKEE) is disordered. The span at 609–619 (NESQTTSSSNN) shows a compositional bias: low complexity. Phosphothreonine is present on threonine 613.

The protein belongs to the WD repeat WDR48 family. Interacts with USP46. Interacts with USP1. Interacts with USP12. Component of the USP12-WDR20-WDR48 deubiquitinating complex. Component of the USP12-DMWD-WDR48 deubiquitinating complex. Interacts with PHLPP1. Interacts with RAD51AP1; the interaction is direct and promotes formation of a trimeric complex with RAD51 via RAD51AP1. Interacts with ATAD5; the interaction regulates USP1-mediated PCNA deubiquitination. Interacts with RAD51; the interaction is enhanced under replication stress. Interacts with ITCH; the interaction is more efficient when both USP12 and WDR48/UAF1 are involved and may facilitate recruitment of the USP12 deubiquitinating complex to Notch.

It is found in the nucleus. The protein localises to the cytoplasm. Its subcellular location is the lysosome. The protein resides in the late endosome. In terms of biological role, regulator of deubiquitinating complexes, which acts as a strong activator of USP1, USP12 and USP46. Enhances the USP1-mediated deubiquitination of FANCD2; USP1 being almost inactive by itself. Activates deubiquitination by increasing the catalytic turnover without increasing the affinity of deubiquitinating enzymes for the substrate. Also activates deubiquitinating activity of complexes containing USP12. Docks at the distal end of the USP12 fingers domain and induces a cascade of structural changes leading to the activation of the enzyme. Together with RAD51AP1, promotes DNA repair by stimulating RAD51-mediated homologous recombination. Binds single-stranded DNA (ssDNA) and double-stranded DNA (dsDNA). DNA-binding is required both for USP1-mediated deubiquitination of FANCD2 and stimulation of RAD51-mediated homologous recombination: both WDR48/UAF1 and RAD51AP1 have coordinated role in DNA-binding during these processes. Together with ATAD5 and by regulating USP1 activity, has a role in PCNA-mediated translesion synthesis (TLS) by deubiquitinating monoubiquitinated PCNA. Together with ATAD5, has a role in recruiting RAD51 to stalled forks during replication stress. This Mus musculus (Mouse) protein is WD repeat-containing protein 48 (Wdr48).